Consider the following 230-residue polypeptide: Heptaprenylglyceryl phosphate synthase (230 aa).

Sn-glycerol 1-phosphate is bound at residue K12. The Mg(2+) site is built by D14 and T40. Residues 159-164 (YIEYSG), G189, and 209-210 (GD) each bind sn-glycerol 1-phosphate.

It belongs to the GGGP/HepGP synthase family. Group I subfamily. Homodimer. Mg(2+) is required as a cofactor.

The catalysed reaction is sn-glycerol 1-phosphate + all-trans-heptaprenyl diphosphate = 3-heptaprenyl-sn-glycero-1-phosphate + diphosphate. Its pathway is membrane lipid metabolism; glycerophospholipid metabolism. Prenyltransferase that catalyzes in vivo the transfer of the heptaprenyl moiety of heptaprenyl pyrophosphate (HepPP; 35 carbon atoms) to the C3 hydroxyl of sn-glycerol-1-phosphate (G1P), producing heptaprenylglyceryl phosphate (HepGP). This reaction is an ether-bond-formation step in the biosynthesis of archaea-type G1P-based membrane lipids found in Bacillales. This chain is Heptaprenylglyceryl phosphate synthase, found in Staphylococcus aureus (strain bovine RF122 / ET3-1).